A 349-amino-acid chain; its full sequence is Phosphorylcholine phosphatase (349 aa).

A signal peptide spans 1–22; the sequence is MTFAKGILAALALAAAVGQASA. D53 (nucleophile) is an active-site residue. D53 and D55 together coordinate Mg(2+). The active-site Proton donor is D55. An intrachain disulfide couples C109 to C116. Residue D284 coordinates Mg(2+).

Belongs to the HAD-like hydrolase superfamily. In terms of assembly, monomer. Homodimer. Homotetramer. Mg(2+) serves as cofactor.

It localises to the periplasm. It carries out the reaction phosphocholine + H2O = choline + phosphate. The enzyme catalyses phosphoethanolamine + H2O = ethanolamine + phosphate. With respect to regulation, activity is inhibited by high concentrations of phosphorylcholine, phosphorylethanolamine, choline or betaine. Displays different properties depending on the substrate utilized, the pH conditions as well as the presence or absence of metal ions. At pH 5, activity is inhibited by Al(3+) ions. At pH 7.4, the enzyme cannot catalyze the hydrolysis of pNPP, phosphorylethanolamine is a poor substrate in either the presence or absence of divalent cations, and activity measured with phosphorylcholine is independent of divalent cations or is not inhibited by Al(3+) ions. Mg(2+) produces identical activation at pH 5.0 and 7.4, but Zn(2+) is an activator at pH 5.0 and becomes an inhibitor at pH 7.4. This inhibition at pH 7.4 may be due to a transition from octahedral to tetrahedral coordination geometry, which is produced by hydrolysis of the Zn-hexacoordinated complex. Catalyzes the hydrolysis of phosphorylcholine (PCho) to produce choline and inorganic phosphate. Can also hydrolyze phosphorylethanolamine and the nonphysiological substrate p-nitrophenylphosphate (pNPP). Shows higher affinity and catalytic efficiency with phosphorylcholine as substrate. Functionally, is probably involved in virulence. The bacteria may break down various host compounds or host cell membranes through the coordinated action of phospholipase C and phosphocholine phosphatase. The final consequence of the action of these enzymes is an increase of the free choline concentration, which may promote the pathogenicity of P.aeruginosa. This Pseudomonas aeruginosa (strain ATCC 15692 / DSM 22644 / CIP 104116 / JCM 14847 / LMG 12228 / 1C / PRS 101 / PAO1) protein is Phosphorylcholine phosphatase.